The following is a 261-amino-acid chain: Hydroxyethylthiazole kinase (261 aa).

M45 provides a ligand contact to substrate. ATP is bound by residues R121 and S167. Residue G194 participates in substrate binding.

This sequence belongs to the Thz kinase family. Mg(2+) is required as a cofactor.

The enzyme catalyses 5-(2-hydroxyethyl)-4-methylthiazole + ATP = 4-methyl-5-(2-phosphooxyethyl)-thiazole + ADP + H(+). The protein operates within cofactor biosynthesis; thiamine diphosphate biosynthesis; 4-methyl-5-(2-phosphoethyl)-thiazole from 5-(2-hydroxyethyl)-4-methylthiazole: step 1/1. Functionally, catalyzes the phosphorylation of the hydroxyl group of 4-methyl-5-beta-hydroxyethylthiazole (THZ). The chain is Hydroxyethylthiazole kinase from Vibrio atlanticus (strain LGP32) (Vibrio splendidus (strain Mel32)).